A 68-amino-acid polypeptide reads, in one-letter code: Ribosome modulation factor (68 aa).

This sequence belongs to the ribosome modulation factor family.

Its subcellular location is the cytoplasm. Its function is as follows. During stationary phase, converts 70S ribosomes to an inactive dimeric form (100S ribosomes). The polypeptide is Ribosome modulation factor (Alcanivorax borkumensis (strain ATCC 700651 / DSM 11573 / NCIMB 13689 / SK2)).